The following is a 243-amino-acid chain: UPF0758 protein alr2351 (243 aa).

Residues 113–235 (PIDSPVAAVA…HQSLREITTL (123 aa)) enclose the MPN domain. Zn(2+) is bound by residues His-184, His-186, and Asp-197. Residues 184–197 (HNHPSGNVEPSPED) carry the JAMM motif motif.

This sequence belongs to the UPF0758 family.

This chain is UPF0758 protein alr2351, found in Nostoc sp. (strain PCC 7120 / SAG 25.82 / UTEX 2576).